We begin with the raw amino-acid sequence, 97 residues long: Aspartyl/glutamyl-tRNA(Asn/Gln) amidotransferase subunit C (97 aa).

The protein belongs to the GatC family. Heterotrimer of A, B and C subunits.

The catalysed reaction is L-glutamyl-tRNA(Gln) + L-glutamine + ATP + H2O = L-glutaminyl-tRNA(Gln) + L-glutamate + ADP + phosphate + H(+). The enzyme catalyses L-aspartyl-tRNA(Asn) + L-glutamine + ATP + H2O = L-asparaginyl-tRNA(Asn) + L-glutamate + ADP + phosphate + 2 H(+). In terms of biological role, allows the formation of correctly charged Asn-tRNA(Asn) or Gln-tRNA(Gln) through the transamidation of misacylated Asp-tRNA(Asn) or Glu-tRNA(Gln) in organisms which lack either or both of asparaginyl-tRNA or glutaminyl-tRNA synthetases. The reaction takes place in the presence of glutamine and ATP through an activated phospho-Asp-tRNA(Asn) or phospho-Glu-tRNA(Gln). This Prochlorococcus marinus (strain SARG / CCMP1375 / SS120) protein is Aspartyl/glutamyl-tRNA(Asn/Gln) amidotransferase subunit C.